The sequence spans 290 residues: Lipoyl synthase (290 aa).

[4Fe-4S] cluster is bound by residues cysteine 32, cysteine 37, cysteine 43, cysteine 58, cysteine 62, cysteine 65, and serine 272. The Radical SAM core domain occupies 44-261; it reads WGEGTATFMI…KEVAVSLGFK (218 aa).

This sequence belongs to the radical SAM superfamily. Lipoyl synthase family. The cofactor is [4Fe-4S] cluster.

The protein resides in the cytoplasm. It carries out the reaction [[Fe-S] cluster scaffold protein carrying a second [4Fe-4S](2+) cluster] + N(6)-octanoyl-L-lysyl-[protein] + 2 oxidized [2Fe-2S]-[ferredoxin] + 2 S-adenosyl-L-methionine + 4 H(+) = [[Fe-S] cluster scaffold protein] + N(6)-[(R)-dihydrolipoyl]-L-lysyl-[protein] + 4 Fe(3+) + 2 hydrogen sulfide + 2 5'-deoxyadenosine + 2 L-methionine + 2 reduced [2Fe-2S]-[ferredoxin]. Its pathway is protein modification; protein lipoylation via endogenous pathway; protein N(6)-(lipoyl)lysine from octanoyl-[acyl-carrier-protein]: step 2/2. In terms of biological role, catalyzes the radical-mediated insertion of two sulfur atoms into the C-6 and C-8 positions of the octanoyl moiety bound to the lipoyl domains of lipoate-dependent enzymes, thereby converting the octanoylated domains into lipoylated derivatives. The polypeptide is Lipoyl synthase (Pyrobaculum aerophilum (strain ATCC 51768 / DSM 7523 / JCM 9630 / CIP 104966 / NBRC 100827 / IM2)).